A 566-amino-acid polypeptide reads, in one-letter code: Beta,beta-carotene 15,15'-dioxygenase (566 aa).

4 residues coordinate Fe cation: H172, H237, H308, and H514. Residues 529-566 are disordered; that stretch reads TPAKTQEDENSDHPTGLTAPGLGHGENDFTAGHGGKSL.

This sequence belongs to the carotenoid oxygenase family. The cofactor is Fe(2+).

Its subcellular location is the cytoplasm. It is found in the cytosol. The enzyme catalyses all-trans-beta-carotene + O2 = 2 all-trans-retinal. The protein operates within cofactor metabolism; retinol metabolism. Functionally, symmetrically cleaves beta-carotene into two molecules of retinal using a dioxygenase mechanism. The polypeptide is Beta,beta-carotene 15,15'-dioxygenase (Rattus norvegicus (Rat)).